An 874-amino-acid chain; its full sequence is Putative disease resistance protein At5g05400 (874 aa).

Positions 22-74 form a coiled coil; it reads LSRNQNRFRNLVDHVAALKKTVRQLEARRDDLLKRIKVQEDRGLNLLDEVQQW. An NB-ARC domain is found at 139–434; it reads AQKGPIPKVE…GQGIILGSKG (296 aa). ATP is bound at residue 182 to 189; that stretch reads GMGGVGKT. 7 LRR repeats span residues 483-505, 506-527, 528-548, 552-574, 575-597, 598-620, and 621-642; these read QKNV…EDQK, AVRR…LHCP, KLET…EFLS, ILMV…SPLY, SLRF…YALR, NLLY…HDLP, and NLEV…VRQI.

This sequence belongs to the disease resistance NB-LRR family.

Functionally, potential disease resistance protein. The chain is Putative disease resistance protein At5g05400 from Arabidopsis thaliana (Mouse-ear cress).